The following is a 147-amino-acid chain: Hemoglobin subunit gamma (147 aa).

Residues 3-147 form the Globin domain; the sequence is NFTAEDKAAI…VASALASRYH (145 aa). Heme b is bound by residues His-64 and His-93.

It belongs to the globin family. Heterotetramer of two alpha chains and two gamma chains in fetal hemoglobin (Hb F). Red blood cells.

Its function is as follows. Gamma chains make up the fetal hemoglobin F, in combination with alpha chains. This chain is Hemoglobin subunit gamma (HBG), found in Lagothrix lagotricha (Brown woolly monkey).